The following is an 853-amino-acid chain: Transcription factor macR (853 aa).

Positions 18–45 (CIVCRRRKVRCGREQPECANCVRMKENC) form a DNA-binding region, zn(2)-C6 fungal-type. Disordered regions lie at residues 54–122 (ESTG…PYPT), 138–166 (ANAP…PTPS), 734–775 (ASDL…AGNK), and 833–853 (LGSQ…DFPG). Polar residues-rich tracts occupy residues 104–116 (PQVS…SPQR), 141–163 (PQIN…SLFP), and 738–752 (RATS…SSTT).

The protein localises to the nucleus. Functionally, transcription factor that regulates the expression of the gene cluster that mediates the biosynthesis of macrophorins, isoprenoid epoxycyclohexenones containing cyclized drimane moieties. In Penicillium terrestre, this protein is Transcription factor macR.